The primary structure comprises 172 residues: 6,7-dimethyl-8-ribityllumazine synthase (172 aa).

5-amino-6-(D-ribitylamino)uracil is bound by residues F22 and 56 to 58 (AFE). 78–79 (LG) serves as a coordination point for (2S)-2-hydroxy-3-oxobutyl phosphate. Residue 80 to 82 (AII) coordinates 5-amino-6-(D-ribitylamino)uracil. The active-site Proton donor is H88. F113 is a binding site for 5-amino-6-(D-ribitylamino)uracil. R127 contributes to the (2S)-2-hydroxy-3-oxobutyl phosphate binding site.

This sequence belongs to the DMRL synthase family.

It carries out the reaction (2S)-2-hydroxy-3-oxobutyl phosphate + 5-amino-6-(D-ribitylamino)uracil = 6,7-dimethyl-8-(1-D-ribityl)lumazine + phosphate + 2 H2O + H(+). It functions in the pathway cofactor biosynthesis; riboflavin biosynthesis; riboflavin from 2-hydroxy-3-oxobutyl phosphate and 5-amino-6-(D-ribitylamino)uracil: step 1/2. Catalyzes the formation of 6,7-dimethyl-8-ribityllumazine by condensation of 5-amino-6-(D-ribitylamino)uracil with 3,4-dihydroxy-2-butanone 4-phosphate. This is the penultimate step in the biosynthesis of riboflavin. In Protochlamydia amoebophila (strain UWE25), this protein is 6,7-dimethyl-8-ribityllumazine synthase.